A 285-amino-acid polypeptide reads, in one-letter code: Phosphatidylserine decarboxylase proenzyme (285 aa).

Residues D89, H146, and S252 each act as charge relay system; for autoendoproteolytic cleavage activity in the active site. S252 (schiff-base intermediate with substrate; via pyruvic acid; for decarboxylase activity) is an active-site residue. Pyruvic acid (Ser); by autocatalysis is present on S252.

This sequence belongs to the phosphatidylserine decarboxylase family. PSD-B subfamily. Prokaryotic type I sub-subfamily. As to quaternary structure, heterodimer of a large membrane-associated beta subunit and a small pyruvoyl-containing alpha subunit. It depends on pyruvate as a cofactor. Is synthesized initially as an inactive proenzyme. Formation of the active enzyme involves a self-maturation process in which the active site pyruvoyl group is generated from an internal serine residue via an autocatalytic post-translational modification. Two non-identical subunits are generated from the proenzyme in this reaction, and the pyruvate is formed at the N-terminus of the alpha chain, which is derived from the carboxyl end of the proenzyme. The autoendoproteolytic cleavage occurs by a canonical serine protease mechanism, in which the side chain hydroxyl group of the serine supplies its oxygen atom to form the C-terminus of the beta chain, while the remainder of the serine residue undergoes an oxidative deamination to produce ammonia and the pyruvoyl prosthetic group on the alpha chain. During this reaction, the Ser that is part of the protease active site of the proenzyme becomes the pyruvoyl prosthetic group, which constitutes an essential element of the active site of the mature decarboxylase.

It localises to the cell membrane. It carries out the reaction a 1,2-diacyl-sn-glycero-3-phospho-L-serine + H(+) = a 1,2-diacyl-sn-glycero-3-phosphoethanolamine + CO2. It participates in phospholipid metabolism; phosphatidylethanolamine biosynthesis; phosphatidylethanolamine from CDP-diacylglycerol: step 2/2. Functionally, catalyzes the formation of phosphatidylethanolamine (PtdEtn) from phosphatidylserine (PtdSer). This is Phosphatidylserine decarboxylase proenzyme from Vibrio cholerae serotype O1 (strain ATCC 39541 / Classical Ogawa 395 / O395).